Consider the following 341-residue polypeptide: MSAVLRKPKTFKLRSLHSEKKFGVAGRSCEEVLRKGCQRLQLPIPGSRLCLYEDGTELTGDYFWSAPDNSELVLLTAGQTWQGFVSDISRFLSVFQEPHAGVIQAARQLLWDERAPLRQKLLADLLGTVSENIAAETRAEDPPWFEGLESRFRSKSGYLRYSCESRIRSYLREVTSGASLVGAEAREEYLRLVGSMQQKLQAAQYNSSYFDRGAKAGRRLCTPEGWFSCQGPFDVDDCTSRHSINPYSNRESRVLFSTWNLDHVIEKKRVVVPALAAAVHDAEGREVDWEYFYRLLFTLENLKLVHIACHKKTTHKLHCDPSRVYCTPAAPRRKRHARHRL.

The CIDE-N domain maps to 7 to 83; sequence KPKTFKLRSL…LLTAGQTWQG (77 aa).

In terms of assembly, heterodimer of DFFA and DFFB. Interacts with H1-1.

The protein resides in the cytoplasm. It is found in the nucleus. Its activity is regulated as follows. Inhibited by DFFA (DFF45). Interacts with HIST1H1A. Functionally, nuclease that induces DNA fragmentation and chromatin condensation during apoptosis. Degrades naked DNA and induces apoptotic morphology. This is DNA fragmentation factor subunit beta (DFFB) from Bos taurus (Bovine).